The sequence spans 306 residues: Protodermal factor 1 (306 aa).

Positions 1–23 (MRGMVSFAVWALFAALLSQQLFA) are cleaved as a signal peptide. Residues 40 to 56 (PPSGSHGTPPSHTPPSS) show a composition bias toward low complexity. Residues 40–156 (PPSGSHGTPP…VVTPPSPIVD (117 aa)) are disordered. Over residues 62–83 (PYDPSPSTPSHPSPPSHTPTPS) the composition is skewed to pro residues. The span at 84 to 99 (TPSHTPTPHTPSHTPT) shows a compositional bias: low complexity. The segment covering 139-154 (SPPPRTPVVVTPPSPI) has biased composition (pro residues).

As to expression, confined to the shoot apical meristem (SAM) at the layer L1 in vegetative, infloresence and floral meristems, as well as in protoderm of organ primordia, including during embryogenesis. Also present in the tip of emerging lateral root primordia.

May be involved in the regulation of meristem growth. The polypeptide is Protodermal factor 1 (PDF1) (Arabidopsis thaliana (Mouse-ear cress)).